The primary structure comprises 249 residues: Nicotinamide/nicotinic acid mononucleotide adenylyltransferase (249 aa).

Residues S34 and F35 each contribute to the NAD(+) site. H42 and K75 together coordinate ATP. The NAD(+) site is built by T112, G141, D143, W154, R173, and N204. 209 to 210 lines the ATP pocket; sequence SR.

This sequence belongs to the eukaryotic NMN adenylyltransferase family. A divalent metal cation serves as cofactor.

It carries out the reaction beta-nicotinamide D-ribonucleotide + ATP + H(+) = diphosphate + NAD(+). The enzyme catalyses nicotinate beta-D-ribonucleotide + ATP + H(+) = deamido-NAD(+) + diphosphate. It participates in cofactor biosynthesis; NAD(+) biosynthesis; deamido-NAD(+) from nicotinate D-ribonucleotide: step 1/1. Its pathway is cofactor biosynthesis; NAD(+) biosynthesis; NAD(+) from nicotinamide D-ribonucleotide: step 1/1. In terms of biological role, catalyzes the formation of NAD(+) from nicotinamide mononucleotide (NMN) and ATP. Can also use the deamidated form; nicotinic acid mononucleotide (NaMN) as substrate. This Oryza sativa subsp. japonica (Rice) protein is Nicotinamide/nicotinic acid mononucleotide adenylyltransferase.